The primary structure comprises 374 residues: N5-carboxyaminoimidazole ribonucleotide synthase (374 aa).

ATP contacts are provided by residues arginine 108, lysine 148, 153-159, 183-186, glutamate 191, histidine 214, and 266-267; these read GYDGKGQ, EKYL, and NE. The 185-residue stretch at 112–296 folds into the ATP-grasp domain; that stretch reads KETLKSAGTK…QFDTHILAVT (185 aa).

Belongs to the PurK/PurT family. Homodimer.

It catalyses the reaction 5-amino-1-(5-phospho-beta-D-ribosyl)imidazole + hydrogencarbonate + ATP = 5-carboxyamino-1-(5-phospho-D-ribosyl)imidazole + ADP + phosphate + 2 H(+). It participates in purine metabolism; IMP biosynthesis via de novo pathway; 5-amino-1-(5-phospho-D-ribosyl)imidazole-4-carboxylate from 5-amino-1-(5-phospho-D-ribosyl)imidazole (N5-CAIR route): step 1/2. Functionally, catalyzes the ATP-dependent conversion of 5-aminoimidazole ribonucleotide (AIR) and HCO(3)(-) to N5-carboxyaminoimidazole ribonucleotide (N5-CAIR). This is N5-carboxyaminoimidazole ribonucleotide synthase from Staphylococcus aureus (strain MSSA476).